A 230-amino-acid polypeptide reads, in one-letter code: MSRAELDKNPRDVASMFDGVARRYDLTNTVLSLGQDRYWRKATRSALGIGPGQKVLDLAAGTAVSTVELNKSGAWCVAADFSVGMLAAGAARRVPKVAGDATRLPFADDVFDAVTISFGLRNVVDTQAALREMARVTRPGGRLVVCEFSTPSNALFATVYKEYLMRALPRVARAVSSNPDAYVYLAESIRAWPDQAALADQIAGAGWAGVRWRNLTGGIVALHAAHRPPR.

S-adenosyl-L-methionine is bound by residues Thr62, Asp80, Asp100 to Ala101, and Ser117.

It belongs to the class I-like SAM-binding methyltransferase superfamily. MenG/UbiE family.

The enzyme catalyses a 2-demethylmenaquinol + S-adenosyl-L-methionine = a menaquinol + S-adenosyl-L-homocysteine + H(+). It participates in quinol/quinone metabolism; menaquinone biosynthesis; menaquinol from 1,4-dihydroxy-2-naphthoate: step 2/2. Methyltransferase required for the conversion of demethylmenaquinol (DMKH2) to menaquinol (MKH2). The protein is Demethylmenaquinone methyltransferase of Mycolicibacterium paratuberculosis (strain ATCC BAA-968 / K-10) (Mycobacterium paratuberculosis).